A 1125-amino-acid polypeptide reads, in one-letter code: tRNA (34-2'-O)-methyltransferase regulator WDR6 (1125 aa).

Met-1 carries the N-acetylmethionine modification. 17 WD repeats span residues 89–130 (SKGL…GNVA), 155–197 (TDRC…PDNK), 207–246 (GHVG…VPGG), 256–294 (GHSA…QAFR), 295–335 (GHQG…YPGL), 346–384 (SRPG…WEQL), 433–475 (LFQG…TGKA), 489–528 (SKQR…FKKP), 567–605 (HGKQ…QPVL), 611–650 (RGMN…KLHI), 652–692 (NCGG…IRPN), 725–765 (EHPD…GAAH), 767–798 (LTAV…HPGL), 860–905 (TRYM…RILH), 912–958 (HHKR…DRGS), 982–1024 (AHSC…PELE), and 1047–1085 (AHAA…PTFM).

The protein belongs to the WD repeat WDR6 family. In terms of assembly, interacts with FTSJ1; the interaction is direct, and required for 2'-O-methylation of position 34 in substrate tRNAs. Interacts with IRS4. Interacts with STK11/LKB1. In terms of tissue distribution, expressed in hypothalamus, hippocampus, cerebrum cortex and cerebellum.

It is found in the cytoplasm. In terms of biological role, together with methyltransferase FTSJ1, methylates the 2'-O-ribose of nucleotides at position 34 of the tRNA anticodon loop of substrate tRNAs. Required for the correct positioning of the substrate tRNA for methylation. Required to suppress amino acid starvation-induced autophagy. Enhances the STK11/LKB1-induced cell growth suppression activity. The polypeptide is tRNA (34-2'-O)-methyltransferase regulator WDR6 (Wdr6) (Rattus norvegicus (Rat)).